Consider the following 460-residue polypeptide: Bifunctional protein GlmU (460 aa).

A pyrophosphorylase region spans residues 1–229; the sequence is MKNYAIILAA…FDESLGVNDR (229 aa). UDP-N-acetyl-alpha-D-glucosamine-binding positions include 8-11, lysine 22, glutamine 72, and 77-78; these read LAAG and GT. Aspartate 102 is a Mg(2+) binding site. Residues glycine 139, glutamate 154, asparagine 169, and asparagine 227 each coordinate UDP-N-acetyl-alpha-D-glucosamine. Asparagine 227 lines the Mg(2+) pocket. Residues 230–250 form a linker region; it reads LALAQAEVIMQERINKQHMLN. An N-acetyltransferase region spans residues 251 to 460; the sequence is GVTLQNPAAT…RLPHHPDQPQ (210 aa). UDP-N-acetyl-alpha-D-glucosamine-binding residues include arginine 332 and lysine 350. The active-site Proton acceptor is the histidine 362. 2 residues coordinate UDP-N-acetyl-alpha-D-glucosamine: tyrosine 365 and asparagine 376. Residues alanine 379, 385–386, serine 404, alanine 422, and arginine 439 each bind acetyl-CoA; that span reads NY.

It in the N-terminal section; belongs to the N-acetylglucosamine-1-phosphate uridyltransferase family. This sequence in the C-terminal section; belongs to the transferase hexapeptide repeat family. In terms of assembly, homotrimer. It depends on Mg(2+) as a cofactor.

It localises to the cytoplasm. It carries out the reaction alpha-D-glucosamine 1-phosphate + acetyl-CoA = N-acetyl-alpha-D-glucosamine 1-phosphate + CoA + H(+). It catalyses the reaction N-acetyl-alpha-D-glucosamine 1-phosphate + UTP + H(+) = UDP-N-acetyl-alpha-D-glucosamine + diphosphate. Its pathway is nucleotide-sugar biosynthesis; UDP-N-acetyl-alpha-D-glucosamine biosynthesis; N-acetyl-alpha-D-glucosamine 1-phosphate from alpha-D-glucosamine 6-phosphate (route II): step 2/2. It functions in the pathway nucleotide-sugar biosynthesis; UDP-N-acetyl-alpha-D-glucosamine biosynthesis; UDP-N-acetyl-alpha-D-glucosamine from N-acetyl-alpha-D-glucosamine 1-phosphate: step 1/1. It participates in bacterial outer membrane biogenesis; LPS lipid A biosynthesis. In terms of biological role, catalyzes the last two sequential reactions in the de novo biosynthetic pathway for UDP-N-acetylglucosamine (UDP-GlcNAc). The C-terminal domain catalyzes the transfer of acetyl group from acetyl coenzyme A to glucosamine-1-phosphate (GlcN-1-P) to produce N-acetylglucosamine-1-phosphate (GlcNAc-1-P), which is converted into UDP-GlcNAc by the transfer of uridine 5-monophosphate (from uridine 5-triphosphate), a reaction catalyzed by the N-terminal domain. The protein is Bifunctional protein GlmU of Streptococcus equi subsp. zooepidemicus (strain ATCC 35246 / C74-63).